Here is a 1032-residue protein sequence, read N- to C-terminus: tRNA wybutosine-synthesizing protein 4 (1032 aa).

S-adenosyl-L-methionine-binding positions include Arg69, Gly95, Asp122, 169–170 (DL), and Glu196. A disordered region spans residues 702 to 726 (ESVEPNKSQSEKATSKPSAQSQNEP). The segment covering 716–725 (SKPSAQSQNE) has biased composition (polar residues). The 156-residue stretch at 833–988 (PTKLPANLAV…AAGRDVYGNR (156 aa)) folds into the JmjC domain.

It belongs to the methyltransferase superfamily. LCMT family.

The enzyme catalyses 7-[(3S)-3-amino-3-carboxypropyl]wyosine(37) in tRNA(Phe) + S-adenosyl-L-methionine = 7-[(3S)-(3-amino-3-methoxycarbonyl)propyl]wyosine(37) in tRNA(Phe) + S-adenosyl-L-homocysteine. It carries out the reaction 7-[(3S)-(3-amino-3-methoxycarbonyl)propyl]wyosine(37) in tRNA(Phe) + S-adenosyl-L-methionine + CO2 = wybutosine(37) in tRNA(Phe) + S-adenosyl-L-homocysteine + 2 H(+). Its pathway is tRNA modification; wybutosine-tRNA(Phe) biosynthesis. In terms of biological role, probable S-adenosyl-L-methionine-dependent methyltransferase that acts as a component of the wybutosine biosynthesis pathway. Wybutosine is a hyper modified guanosine with a tricyclic base found at the 3'-position adjacent to the anticodon of eukaryotic phenylalanine tRNA. May methylate the carboxyl group of leucine residues to form alpha-leucine ester residues. This chain is tRNA wybutosine-synthesizing protein 4 (ppm2), found in Aspergillus oryzae (strain ATCC 42149 / RIB 40) (Yellow koji mold).